We begin with the raw amino-acid sequence, 542 residues long: uncharacterized protein (542 aa).

Residues 125-138 (ANSNSSSTGRDSTP) show a composition bias toward low complexity. Disordered stretches follow at residues 125-182 (ANSN…NHHN), 194-333 (LPPT…CSSS), 390-428 (SSST…YSSI), and 459-487 (SSSS…PSCN). Polar residues predominate over residues 202-213 (QKPSFLSNSNQI). Composition is skewed to low complexity over residues 228 to 306 (SYTS…NSNN), 314 to 333 (NKLS…CSSS), 390 to 423 (SSST…TSTN), and 459 to 479 (SSSS…GGNS).

This is an uncharacterized protein from Dictyostelium discoideum (Social amoeba).